Here is a 336-residue protein sequence, read N- to C-terminus: tRNA N6-adenosine threonylcarbamoyltransferase (336 aa).

His114 and His118 together coordinate Fe cation. Substrate contacts are provided by residues 136–140, Asp169, Gly182, Asp186, and Asn275; that span reads LVSGG. Asp301 is a binding site for Fe cation.

This sequence belongs to the KAE1 / TsaD family. The cofactor is Fe(2+).

The protein resides in the cytoplasm. It carries out the reaction L-threonylcarbamoyladenylate + adenosine(37) in tRNA = N(6)-L-threonylcarbamoyladenosine(37) in tRNA + AMP + H(+). In terms of biological role, required for the formation of a threonylcarbamoyl group on adenosine at position 37 (t(6)A37) in tRNAs that read codons beginning with adenine. Is involved in the transfer of the threonylcarbamoyl moiety of threonylcarbamoyl-AMP (TC-AMP) to the N6 group of A37, together with TsaE and TsaB. TsaD likely plays a direct catalytic role in this reaction. The chain is tRNA N6-adenosine threonylcarbamoyltransferase from Streptococcus pneumoniae serotype 19F (strain G54).